A 174-amino-acid chain; its full sequence is Male-enhanced antigen 1 (174 aa).

Disordered regions lie at residues M1–D77 and L94–D123. Composition is skewed to acidic residues over residues S38 to E48, P65 to D77, and L101 to G110. S103 carries the phosphoserine modification.

Functionally, may play an important role in spermatogenesis and/or testis development. The chain is Male-enhanced antigen 1 (MEA1) from Sus scrofa (Pig).